The sequence spans 205 residues: Holliday junction branch migration complex subunit RuvA (205 aa).

The domain I stretch occupies residues methionine 1–isoleucine 64. The tract at residues threonine 65–glutamate 143 is domain II. Positions arginine 144–proline 156 are flexible linker. Positions valine 157–leucine 205 are domain III.

Belongs to the RuvA family. Homotetramer. Forms an RuvA(8)-RuvB(12)-Holliday junction (HJ) complex. HJ DNA is sandwiched between 2 RuvA tetramers; dsDNA enters through RuvA and exits via RuvB. An RuvB hexamer assembles on each DNA strand where it exits the tetramer. Each RuvB hexamer is contacted by two RuvA subunits (via domain III) on 2 adjacent RuvB subunits; this complex drives branch migration. In the full resolvosome a probable DNA-RuvA(4)-RuvB(12)-RuvC(2) complex forms which resolves the HJ.

It localises to the cytoplasm. Its function is as follows. The RuvA-RuvB-RuvC complex processes Holliday junction (HJ) DNA during genetic recombination and DNA repair, while the RuvA-RuvB complex plays an important role in the rescue of blocked DNA replication forks via replication fork reversal (RFR). RuvA specifically binds to HJ cruciform DNA, conferring on it an open structure. The RuvB hexamer acts as an ATP-dependent pump, pulling dsDNA into and through the RuvAB complex. HJ branch migration allows RuvC to scan DNA until it finds its consensus sequence, where it cleaves and resolves the cruciform DNA. The chain is Holliday junction branch migration complex subunit RuvA from Shewanella woodyi (strain ATCC 51908 / MS32).